Consider the following 181-residue polypeptide: MRIVLLGPPGAGKGTQAQKLAEKLGIPQISTGDLFRYNISNGTELGLEAKKYLDAGDLVPATLTNALVDDRLDDEDAAAGFILDGYPRSVEQAKALDEMLKKRDLSLDAVLEFRVPEEELVSRLKGRGRDDDTEDVIRNRFRVYRDETAPLLDYYSADLKTVDAVGELDEVFARALKALGR.

10 to 15 (GAGKGT) contributes to the ATP binding site. The tract at residues 30-59 (STGDLFRYNISNGTELGLEAKKYLDAGDLV) is NMP. AMP contacts are provided by residues Thr-31, Arg-36, 57–59 (DLV), 85–88 (GYPR), and Gln-92. The interval 126 to 132 (GRGRDDD) is LID. An ATP-binding site is contributed by Arg-127. Positions 129 and 140 each coordinate AMP. Gly-166 lines the ATP pocket.

Belongs to the adenylate kinase family. In terms of assembly, monomer.

It localises to the cytoplasm. The catalysed reaction is AMP + ATP = 2 ADP. It participates in purine metabolism; AMP biosynthesis via salvage pathway; AMP from ADP: step 1/1. Its function is as follows. Catalyzes the reversible transfer of the terminal phosphate group between ATP and AMP. Plays an important role in cellular energy homeostasis and in adenine nucleotide metabolism. The polypeptide is Adenylate kinase (Mycolicibacterium vanbaalenii (strain DSM 7251 / JCM 13017 / BCRC 16820 / KCTC 9966 / NRRL B-24157 / PYR-1) (Mycobacterium vanbaalenii)).